The following is a 230-amino-acid chain: Small ribosomal subunit protein uS3 (230 aa).

The region spanning 43-95 (VNRVIIYSARPKMISEERKAHLAKLLELKFGLEKPVIEVLPIENPNLDAHVIA) is the KH type-2 domain.

The protein belongs to the universal ribosomal protein uS3 family. In terms of assembly, part of the 30S ribosomal subunit.

Binds the lower part of the 30S subunit head. The protein is Small ribosomal subunit protein uS3 of Nanoarchaeum equitans (strain Kin4-M).